We begin with the raw amino-acid sequence, 570 residues long: Methionine--tRNA ligase (570 aa).

A 'HIGH' region motif is present at residues 11–21 (PYVQTVPHLGN). Positions 143, 146, 156, and 159 each coordinate Zn(2+). The 'KMSKS' region signature appears at 333 to 337 (KFSKS). Residue Lys336 participates in ATP binding.

Belongs to the class-I aminoacyl-tRNA synthetase family. MetG type 1 subfamily. Zn(2+) serves as cofactor.

The protein localises to the cytoplasm. It carries out the reaction tRNA(Met) + L-methionine + ATP = L-methionyl-tRNA(Met) + AMP + diphosphate. Functionally, is required not only for elongation of protein synthesis but also for the initiation of all mRNA translation through initiator tRNA(fMet) aminoacylation. The sequence is that of Methionine--tRNA ligase from Pyrobaculum aerophilum (strain ATCC 51768 / DSM 7523 / JCM 9630 / CIP 104966 / NBRC 100827 / IM2).